Consider the following 98-residue polypeptide: NADH-ubiquinone oxidoreductase chain 4L (98 aa).

Transmembrane regions (helical) follow at residues 26-46 (LVAS…MATL) and 61-81 (IILL…LISI).

It belongs to the complex I subunit 4L family. As to quaternary structure, core subunit of respiratory chain NADH dehydrogenase (Complex I) which is composed of 45 different subunits.

The protein resides in the mitochondrion inner membrane. It catalyses the reaction a ubiquinone + NADH + 5 H(+)(in) = a ubiquinol + NAD(+) + 4 H(+)(out). Its function is as follows. Core subunit of the mitochondrial membrane respiratory chain NADH dehydrogenase (Complex I) which catalyzes electron transfer from NADH through the respiratory chain, using ubiquinone as an electron acceptor. Part of the enzyme membrane arm which is embedded in the lipid bilayer and involved in proton translocation. This Macaca nigrescens (Gorontalo macaque) protein is NADH-ubiquinone oxidoreductase chain 4L (MT-ND4L).